The primary structure comprises 898 residues: Endoplasmic reticulum metallopeptidase 1 (898 aa).

M1 is modified (N-acetylmethionine). The interval 1 to 55 is disordered; it reads MEWSSESAAVRRHRGTAERREGEAAASHRQREASAQEDAKGVGRMWGKTENGGGS. Topologically, residues 1–66 are cytoplasmic; sequence MEWSSESAAV…VAKTALSEAR (66 aa). A compositionally biased stretch (basic and acidic residues) spans 29 to 41; that stretch reads RQREASAQEDAKG. Residues 67–87 traverse the membrane as a helical segment; sequence TALALALYLLALRALVQLSLQ. Over 88–393 the chain is Lumenal; it reads RLVLSRTSGL…SSSEYRHGSM (306 aa). N176 carries an N-linked (GlcNAc...) asparagine glycan. C198 and C216 are oxidised to a cystine. Zn(2+) contacts are provided by H199 and D211. E245 (proton acceptor) is an active-site residue. Zn(2+) contacts are provided by E246, E272, and H348. A helical transmembrane segment spans residues 394–414; that stretch reads VFFDVLGLLVIAYPSRVGSII. At 415 to 451 the chain is on the cytoplasmic side; sequence NYMVVMAVVLYLGKKLLRPKHRNANYMRDFLCGLGIT. A helical membrane pass occupies residues 452–472; that stretch reads FISWFTSLVTVLIIAVFISLI. Residues 473 to 480 are Lumenal-facing; that stretch reads GQSLSWYN. A helical membrane pass occupies residues 481 to 501; the sequence is YFYIAVCLYGTATVAKIIFIH. The Cytoplasmic segment spans residues 502 to 515; it reads TLAKRFYYMNASDL. A helical membrane pass occupies residues 516–538; sequence YLGELFFDTSLFVHCAFLVALTY. The Lumenal portion of the chain corresponds to 539-542; the sequence is QGFC. A helical transmembrane segment spans residues 543 to 562; the sequence is SAFMSAVWVVFPLLTKLCVY. Residues 563 to 573 are Cytoplasmic-facing; sequence KDFKKHGAQGR. Residues 574-594 traverse the membrane as a helical segment; sequence FVALYLLGMFIPYLYGLYLIW. Over 595–615 the chain is Lumenal; sequence AVFEMFTPILGRSGSEIPPDV. A helical transmembrane segment spans residues 616–636; that stretch reads VLASILAVCVMILSSYFITFI. The Cytoplasmic portion of the chain corresponds to 637–645; the sequence is YLVNSTKKT. A helical membrane pass occupies residues 646-666; sequence ILTLILVCAVTFLLVCSGAFF. At 667-898 the chain is on the lumenal side; sequence PYSSNPESPK…WVSTYSLFVF (232 aa). Residue N724 is glycosylated (N-linked (GlcNAc...) asparagine).

Belongs to the peptidase M28 family. The cofactor is Zn(2+).

The protein localises to the endoplasmic reticulum membrane. Its function is as follows. Within the ovary, required for the organization of somatic cells and oocytes into discrete follicular structures. The sequence is that of Endoplasmic reticulum metallopeptidase 1 from Mus musculus (Mouse).